We begin with the raw amino-acid sequence, 65 residues long: MPKLKTRKAAAKRFRATGTGKIVRRKAFKNHLLEHKTTNKKRQFSKMAIVNERDEENVRLMLPYL.

The protein belongs to the bacterial ribosomal protein bL35 family.

This is Large ribosomal subunit protein bL35 from Nostoc sp. (strain PCC 7120 / SAG 25.82 / UTEX 2576).